Reading from the N-terminus, the 441-residue chain is ATP-dependent protease ATPase subunit HslU (441 aa).

Residues Val-18, 60–65 (GVGKTE), Asp-253, Glu-319, and Arg-391 contribute to the ATP site.

Belongs to the ClpX chaperone family. HslU subfamily. In terms of assembly, a double ring-shaped homohexamer of HslV is capped on each side by a ring-shaped HslU homohexamer. The assembly of the HslU/HslV complex is dependent on binding of ATP.

The protein resides in the cytoplasm. Its function is as follows. ATPase subunit of a proteasome-like degradation complex; this subunit has chaperone activity. The binding of ATP and its subsequent hydrolysis by HslU are essential for unfolding of protein substrates subsequently hydrolyzed by HslV. HslU recognizes the N-terminal part of its protein substrates and unfolds these before they are guided to HslV for hydrolysis. The chain is ATP-dependent protease ATPase subunit HslU from Nitratidesulfovibrio vulgaris (strain DP4) (Desulfovibrio vulgaris).